Reading from the N-terminus, the 347-residue chain is Isopentenyl-diphosphate delta-isomerase (347 aa).

5–6 serves as a coordination point for substrate; it reads RK. FMN contacts are provided by residues serine 61, 62 to 64, serine 92, and asparagine 120; that span reads SMT. 92–94 is a substrate binding site; the sequence is SMR. A substrate-binding site is contributed by glutamine 159. Residue glutamate 160 coordinates Mg(2+). FMN-binding positions include lysine 189, serine 214, threonine 219, 269-271, and 290-291; these read GLR and AR.

This sequence belongs to the IPP isomerase type 2 family. Homooctamer. Dimer of tetramers. FMN serves as cofactor. The cofactor is NADPH. Requires Mg(2+) as cofactor.

It localises to the cytoplasm. The enzyme catalyses isopentenyl diphosphate = dimethylallyl diphosphate. Involved in the biosynthesis of isoprenoids. Catalyzes the 1,3-allylic rearrangement of the homoallylic substrate isopentenyl (IPP) to its allylic isomer, dimethylallyl diphosphate (DMAPP). The chain is Isopentenyl-diphosphate delta-isomerase from Thermoplasma volcanium (strain ATCC 51530 / DSM 4299 / JCM 9571 / NBRC 15438 / GSS1).